Reading from the N-terminus, the 326-residue chain is MRKYRLSEEQRAFSYQEDGTKKNVLLRQIIAISDFNDVIAGTAGGWIDRETVLAQEGNCWIYDQNAIAFGGAVISGNTRITGTSVLWGEVYATDNVWIDNSEISQGAYISDSVTIHDSLVYGQCRIFGHALIDQHSMIVAAQGLTPDHQLLLQIYDRARVSASRIVHQAQIYGDAVVRYAFIEHRAEVFDFASIEGNEENNVWLCDCAKVYGHAQVKAGIEEDAIPTIHYSSQVAEYAIVEGNCVLKHHVLVGGNAVVRGGPILLDEHVVIQGESRITGAVIIENHVELTDHAVVEAFDGDTVHVRGPKVINGEERITRTPLAGLL.

The protein belongs to the transferase hexapeptide repeat family.

This is an uncharacterized protein from Escherichia coli (strain K12).